We begin with the raw amino-acid sequence, 554 residues long: Dihydroxy-acid dehydratase (554 aa).

Asp-78 serves as a coordination point for Mg(2+). Cys-119 lines the [2Fe-2S] cluster pocket. Residues Asp-120 and Lys-121 each coordinate Mg(2+). Lys-121 carries the post-translational modification N6-carboxylysine. Cys-191 is a [2Fe-2S] cluster binding site. Glu-444 provides a ligand contact to Mg(2+). The active-site Proton acceptor is Ser-470.

This sequence belongs to the IlvD/Edd family. Homodimer. The cofactor is [2Fe-2S] cluster. Requires Mg(2+) as cofactor.

The catalysed reaction is (2R)-2,3-dihydroxy-3-methylbutanoate = 3-methyl-2-oxobutanoate + H2O. The enzyme catalyses (2R,3R)-2,3-dihydroxy-3-methylpentanoate = (S)-3-methyl-2-oxopentanoate + H2O. It participates in amino-acid biosynthesis; L-isoleucine biosynthesis; L-isoleucine from 2-oxobutanoate: step 3/4. It functions in the pathway amino-acid biosynthesis; L-valine biosynthesis; L-valine from pyruvate: step 3/4. Its function is as follows. Functions in the biosynthesis of branched-chain amino acids. Catalyzes the dehydration of (2R,3R)-2,3-dihydroxy-3-methylpentanoate (2,3-dihydroxy-3-methylvalerate) into 2-oxo-3-methylpentanoate (2-oxo-3-methylvalerate) and of (2R)-2,3-dihydroxy-3-methylbutanoate (2,3-dihydroxyisovalerate) into 2-oxo-3-methylbutanoate (2-oxoisovalerate), the penultimate precursor to L-isoleucine and L-valine, respectively. The polypeptide is Dihydroxy-acid dehydratase (Nitratidesulfovibrio vulgaris (strain ATCC 29579 / DSM 644 / CCUG 34227 / NCIMB 8303 / VKM B-1760 / Hildenborough) (Desulfovibrio vulgaris)).